The chain runs to 301 residues: tRNA dimethylallyltransferase (301 aa).

9–16 contributes to the ATP binding site; it reads GPTASGKS. Residue 11 to 16 coordinates substrate; that stretch reads TASGKS. An interaction with substrate tRNA region spans residues 34–37; that stretch reads DSMQ.

Belongs to the IPP transferase family. Monomer. It depends on Mg(2+) as a cofactor.

It carries out the reaction adenosine(37) in tRNA + dimethylallyl diphosphate = N(6)-dimethylallyladenosine(37) in tRNA + diphosphate. Functionally, catalyzes the transfer of a dimethylallyl group onto the adenine at position 37 in tRNAs that read codons beginning with uridine, leading to the formation of N6-(dimethylallyl)adenosine (i(6)A). This chain is tRNA dimethylallyltransferase, found in Corynebacterium glutamicum (strain ATCC 13032 / DSM 20300 / JCM 1318 / BCRC 11384 / CCUG 27702 / LMG 3730 / NBRC 12168 / NCIMB 10025 / NRRL B-2784 / 534).